Consider the following 110-residue polypeptide: FMRFamide-like neuropeptides 11 (110 aa).

An N-terminal signal peptide occupies residues Met1 to Ser22. The propeptide occupies Tyr23 to Glu29. Phenylalanine amide occurs at positions 40 and 54. The disordered stretch occupies residues Leu60 to Phe85. The residue at position 72 (Gln72) is a Glutamine amide. The residue at position 85 (Phe85) is a Phenylalanine amide. Positions Ser88–Lys110 are excised as a propeptide.

This sequence belongs to the FARP (FMRFamide related peptide) family. In terms of tissue distribution, each flp gene is expressed in a distinct set of neurons. Flp-11 is expressed in the DD, VD and DVB motor neurons, the PVC and URX interneurons, and the AUA, BAG, DA, LUA, and SAB neurons. Also expressed in head muscle, socket or sheath cells and uterine cells. Expressed exclusively in PHC sensory neurons in males. Expressed in AVK and RIS interneurons.

It localises to the secreted. In terms of biological role, FMRFamides and FMRFamide-like peptides are neuropeptides. Induces sleep-like quiescence behavior following release from RIS interneuron. Helps to sustain locomotion stop after gamma-aminobutyric acid (GABA) induces fast slowing response. Inhibits the late-stage body bend swimming frequency in animals through several receptors including frpr-3, npr-4 and npr-22. Its function is as follows. Potent inhibitor of the activity of the dissected pharyngeal myogenic muscle system. Acts as a ligand for the npr-22 receptor in vitro. Acts as a ligand for the npr-22 receptor in vitro. This Caenorhabditis elegans protein is FMRFamide-like neuropeptides 11.